The following is a 182-amino-acid chain: Interferon gamma 1 (182 aa).

An N-terminal signal peptide occupies residues 1-21 (MIAQNMTIFFWGVCLLTSGWA). An N-linked (GlcNAc...) asparagine glycan is attached at asparagine 93.

Belongs to the type II (or gamma) interferon family. Homodimer. As to expression, highly expressed in spleen. Also detected at lower levels in brain, gill, kidney, heart, intestine and muscle. In immune cell populations, has highest expression in peripheral blood leukocytes and splenocytes. Detected in kidney-derived monocytes, neutrophils, macrophages and leukocytes.

The protein localises to the secreted. Functionally, cytokine which binds to interferon gamma receptor 1-like (ifngr1l). Has activating effects on primary macrophages and neutrophils. Induces nitric oxide production and phagocytic responses in macrophages. Primes macrophages and neutrophils for production of reactive oxygen intermediates (ROI). Stimulates phosphorylation and nuclear localization of the JAK/STAT signal transducer stat1. Promotes increased expression of a number of genes important for macrophage activity, including the interferon regulatory factors irf1, irf2, irf8 and irf9. The protein is Interferon gamma 1 of Carassius auratus (Goldfish).